The sequence spans 359 residues: S-geranylgeranyl-glutathione receptor P2RY8 (359 aa).

The Extracellular segment spans residues 1-19; the sequence is MQVPNSTGPDNATLQMLRN. 2 N-linked (GlcNAc...) asparagine glycosylation sites follow: Asn-5 and Asn-11. Residues 20–40 traverse the membrane as a helical segment; sequence PAIAVALPVVYSLVAAVSIPG. Residues 41-57 are Cytoplasmic-facing; it reads NLFSLWVLCRRMGPRSP. The chain crosses the membrane as a helical span at residues 58–78; the sequence is SVIFMINLSVTDLMLASVLPF. The Extracellular portion of the chain corresponds to 79–88; it reads QIYYHCNRHH. Residues 89–109 form a helical membrane-spanning segment; the sequence is WVFGVLLCNVVTVAFYANMYS. Over 110-138 the chain is Cytoplasmic; sequence SILTMTCISVERFLGVLYPLSSKRWRRRR. The helical transmembrane segment at 139–159 threads the bilayer; that stretch reads YAVAACAGTWLLLLTALSPLA. Over 160–187 the chain is Extracellular; the sequence is RTDLTYPVHALGIITCFDVLKWTMLPSV. The helical transmembrane segment at 188-208 threads the bilayer; it reads AMWAVFLFTIFILLFLIPFVI. Over 209–237 the chain is Cytoplasmic; sequence TVACYTATILKLLRTEEAHGREQRRRAVG. The chain crosses the membrane as a helical span at residues 238–258; sequence LAAVVLLAFVTCFAPNNFVLL. At 259–275 the chain is on the extracellular side; sequence AHIVSRLFYGKSYYHVY. The chain crosses the membrane as a helical span at residues 276–296; the sequence is KLTLCLSCLNNCLDPFVYYFA. The Cytoplasmic portion of the chain corresponds to 297-359; that stretch reads SREFQLRLRE…PGLQRQESVF (63 aa). Residues 329 to 359 form a disordered region; that stretch reads RTTSVRSEAGAHPEGMEGATRPGLQRQESVF.

The protein belongs to the G-protein coupled receptor 1 family. As to expression, barely detectable in normal blood leukocytes. Weaker expression was seen in heart, kidney and lung. Not detected in brain. Expressed in B cells and follicular helper T cells in germinal centers (at protein level).

Its subcellular location is the cell membrane. Its function is as follows. G protein-coupled receptor for S-geranylgeranyl-glutathione (GGG), an endogenous metabolite present in lymphoid tissues. Couples the binding of GGG to the activation of GNA13 and downstream repression of AKT activation in lymphocytes defining their positioning and growth within lymphoid organs. In lymphoid follicles, confines B cells and follicular helper T cells in germinal centers (GCs) in response to GGG local gradients established by GGT5 (via GGG catabolism) and ABCC1 (via extracellular transport) with lower concentrations of GGG found in the follicular dendritic cell network region around which germinal centers are formed. In the bone marrow, also in response to GGG gradients established by GGT5 and ABCC1, it restricts chemotactic transmigration of B cells, T cells and NK cells from blood vessels to the bone marrow parenchyma. Contributes to GNA13-dependent pathway that suppresses GC B cell growth. This Homo sapiens (Human) protein is S-geranylgeranyl-glutathione receptor P2RY8.